The sequence spans 536 residues: CTP synthase (536 aa).

The tract at residues 1 to 267 (MTKFIFVTGG…DDIVIKRLQL (267 aa)) is amidoligase domain. CTP is bound at residue Ser13. Ser13 serves as a coordination point for UTP. 14–19 (SLGKGI) contacts ATP. Tyr54 serves as a coordination point for L-glutamine. Asp71 is a binding site for ATP. Residues Asp71 and Glu141 each coordinate Mg(2+). CTP is bound by residues 148–150 (DIE), 188–193 (KTKPTQ), and Lys224. UTP is bound by residues 188–193 (KTKPTQ) and Lys224. 240–242 (RDA) provides a ligand contact to ATP. Residues 293–535 (TIGLVGKYVS…IEASLKYQQN (243 aa)) form the Glutamine amidotransferase type-1 domain. An L-glutamine-binding site is contributed by Gly355. Cys382 functions as the Nucleophile; for glutamine hydrolysis in the catalytic mechanism. Residues 383 to 386 (LGMQ), Glu406, and Arg463 each bind L-glutamine. Active-site residues include His508 and Glu510.

The protein belongs to the CTP synthase family. Homotetramer.

The catalysed reaction is UTP + L-glutamine + ATP + H2O = CTP + L-glutamate + ADP + phosphate + 2 H(+). It carries out the reaction L-glutamine + H2O = L-glutamate + NH4(+). It catalyses the reaction UTP + NH4(+) + ATP = CTP + ADP + phosphate + 2 H(+). It functions in the pathway pyrimidine metabolism; CTP biosynthesis via de novo pathway; CTP from UDP: step 2/2. Its activity is regulated as follows. Allosterically activated by GTP, when glutamine is the substrate; GTP has no effect on the reaction when ammonia is the substrate. The allosteric effector GTP functions by stabilizing the protein conformation that binds the tetrahedral intermediate(s) formed during glutamine hydrolysis. Inhibited by the product CTP, via allosteric rather than competitive inhibition. In terms of biological role, catalyzes the ATP-dependent amination of UTP to CTP with either L-glutamine or ammonia as the source of nitrogen. Regulates intracellular CTP levels through interactions with the four ribonucleotide triphosphates. This chain is CTP synthase, found in Staphylococcus aureus (strain COL).